We begin with the raw amino-acid sequence, 144 residues long: Large ribosomal subunit protein uL15 (144 aa).

Positions 1-56 are disordered; it reads MELNNLKPAEGAKHAKRRVGRGIGSGLGKTAGRGHKGQKSRSGGFHKVGFEGGQMP. Positions 21-31 are enriched in gly residues; it reads RGIGSGLGKTA.

Belongs to the universal ribosomal protein uL15 family. Part of the 50S ribosomal subunit.

Functionally, binds to the 23S rRNA. This chain is Large ribosomal subunit protein uL15, found in Burkholderia mallei (strain NCTC 10247).